The following is a 212-amino-acid chain: Golgi SNAP receptor complex member 2 homolog memb-1 (212 aa).

The Cytoplasmic segment spans residues 1–189; that stretch reads MEAQYQSTNF…QVIDRRVRED (189 aa). The helical; Anchor for type IV membrane protein transmembrane segment at 190–210 threads the bilayer; sequence WIFVIGCIVCCIFMYAFYRFW. Over 211–212 the chain is Vesicular; that stretch reads RG.

The protein belongs to the GOSR2 family. As to quaternary structure, part of a unique SNARE complex.

Its subcellular location is the golgi apparatus. The protein resides in the cis-Golgi network membrane. It localises to the golgi apparatus membrane. The protein localises to the endoplasmic reticulum membrane. Its function is as follows. Involved in transport of proteins from the cis/medial-Golgi to the trans-Golgi network. The polypeptide is Golgi SNAP receptor complex member 2 homolog memb-1 (Caenorhabditis briggsae).